The following is a 2240-amino-acid chain: Nonribisomal peptide synthetase notE (2240 aa).

The interval 22 to 52 (TETMRETLSSSSSPLSLSSITSPLSSASEPP) is disordered. Residues 28–52 (TLSSSSSPLSLSSITSPLSSASEPP) are compositionally biased toward low complexity. Residues 85–484 (QQRCREAPES…GRKEGQVKIR (400 aa)) are adenylation 1. The Carrier 1 domain occupies 616–692 (PPTTATEHAL…EQARKATPVS (77 aa)). O-(pantetheine 4'-phosphoryl)serine is present on S653. The segment at 732–1144 (EDIFPCTPLQ…DFASPQDRDL (413 aa)) is condensation 1. The tract at residues 1167–1564 (QEARQPSREA…GRRDTQLKLR (398 aa)) is adenylation 2. Residues 1700–1776 (PVSRGPELRL…ELARCTGEEP (77 aa)) form the Carrier 2 domain. S1737 is subject to O-(pantetheine 4'-phosphoryl)serine. Residues 1845 to 2159 (FSFHGEVSVE…ILQHQNIDMD (315 aa)) are condensation 2. The disordered stretch occupies residues 2008 to 2027 (CTMPVKATPPTDSDDSRPSA).

Belongs to the NRP synthetase family.

The enzyme catalyses L-proline + L-tryptophan + 2 ATP = brevianamide F + 2 AMP + 2 diphosphate + 2 H(+). Its pathway is alkaloid biosynthesis. In terms of biological role, nonribisomal peptide synthetase; part of the gene cluster that mediates the biosynthesis of notoamide, a fungal indole alkaloid that belongs to a family of natural products containing a characteristic bicyclo[2.2.2]diazaoctane core. The first step of notoamide biosynthesis involves coupling of L-proline and L-tryptophan by the bimodular NRPS notE, to produce cyclo-L-tryptophan-L-proline called brevianamide F. The reverse prenyltransferase notF then acts as a deoxybrevianamide E synthase and converts brevianamide F to deoxybrevianamide E via reverse prenylation at C-2 of the indole ring leading to the bicyclo[2.2.2]diazaoctane core. Deoxybrevianamide E is further hydroxylated at C-6 of the indole ring, likely catalyzed by the cytochrome P450 monooxygenase notG, to yield 6-hydroxy-deoxybrevianamide E. 6-hydroxy-deoxybrevianamide E is a specific substrate of the prenyltransferase notC for normal prenylation at C-7 to produce 6-hydroxy-7-prenyl-deoxybrevianamide, also called notoamide S. As the proposed pivotal branching point in notoamide biosynthesis, notoamide S can be diverted to notoamide E through an oxidative pyran ring closure putatively catalyzed by either notH cytochrome P450 monooxygenase or the notD FAD-linked oxidoreductase. This step would be followed by an indole 2,3-epoxidation-initiated pinacol-like rearrangement catalyzed by the notB FAD-dependent monooxygenase leading to the formation of notoamide C and notoamide D. On the other hand notoamide S is converted to notoamide T by notH (or notD), a bifunctional oxidase that also functions as the intramolecular Diels-Alderase responsible for generation of (+)-notoamide T. To generate antipodal (-)-notoaminide T, notH' (or notD') in Aspergillus versicolor is expected to catalyze a Diels-Alder reaction leading to the opposite stereochemistry. The remaining oxidoreductase notD (or notH) likely catalyzes the oxidative pyran ring formation to yield (+)-stephacidin A. The FAD-dependent monooxygenase notI is highly similar to notB and is predicted to catalyze a similar conversion from (+)-stephacidin A to (-)-notoamide B via the 2,3-epoxidation of (+)-stephacidin A followed by a pinacol-type rearrangement. Finally, it remains unclear which enzyme could be responsible for the final hydroxylation steps leading to notoamide A and sclerotiamide. This is Nonribisomal peptide synthetase notE from Aspergillus sp. (strain MF297-2).